The chain runs to 316 residues: tRNA dimethylallyltransferase (316 aa).

17 to 24 (GPTASGKT) is an ATP binding site. Residue 19 to 24 (TASGKT) coordinates substrate. 4 interaction with substrate tRNA regions span residues 42–45 (DSAL), 166–170 (QRLSR), 247–252 (RCVGYR), and 280–287 (KRQITWLR).

It belongs to the IPP transferase family. As to quaternary structure, monomer. Mg(2+) serves as cofactor.

It carries out the reaction adenosine(37) in tRNA + dimethylallyl diphosphate = N(6)-dimethylallyladenosine(37) in tRNA + diphosphate. In terms of biological role, catalyzes the transfer of a dimethylallyl group onto the adenine at position 37 in tRNAs that read codons beginning with uridine, leading to the formation of N6-(dimethylallyl)adenosine (i(6)A). The polypeptide is tRNA dimethylallyltransferase (Enterobacter sp. (strain 638)).